The primary structure comprises 510 residues: Probable cytochrome P450 312a1 (510 aa).

A heme-binding site is contributed by Cys-455.

This sequence belongs to the cytochrome P450 family. The cofactor is heme.

It is found in the endoplasmic reticulum membrane. Its subcellular location is the microsome membrane. In terms of biological role, may be involved in the metabolism of insect hormones and in the breakdown of synthetic insecticides. This is Probable cytochrome P450 312a1 (Cyp312a1) from Drosophila melanogaster (Fruit fly).